The chain runs to 508 residues: MQRLLTPVRQVLRVKRAMQEASFMPPLLPPAAHQRFSTVPAVPVAKADTWPKDVGILALEVYFPAQYVDQTDLEKFDNVEAGRYTVGLGQTHMGFCSVQEDINSLCLTVVQRLMERTQLPWDSVGWLEVGTETIIDKSKSVKTVLMELFQDSGNTDIEGIDTTNACYGGTASLFNAANWVESSAWDGRYAVVVCGDIAVYPRGNSRPTGGAGAVAMLVGPEAPLALERGLRGTHMENAYDFYKPNATSEYPLVDGKLSIQCYLRALDRCYTLYRQKIEKQWKQAGIERHFTLDDLQFMIFHTPFCKLVQKSLARLMFSDFLLADSDTQSSLYKGLEAFRGQKLEDTYANKDIEKAFQKASLDLFNKKTKPSLYLSLHNGNMYTSSLYGCLASLLSQCSAQDLAGSRIGAFSYGSGLAASFYSLRVSQDASPGSPLEKLVSSVSDLPERLASRKRVSPEEFTEIMNQREQYYHKVNFTPPGDPNSLFPGTWYLERVDELYRRKYARHLV.

Residues 1-37 (MQRLLTPVRQVLRVKRAMQEASFMPPLLPPAAHQRFS) constitute a mitochondrion transit peptide. Residue K52 is modified to N6-succinyllysine. E80 and A81 together coordinate (3S)-3-hydroxy-3-methylglutaryl-CoA. E132 serves as the catalytic Proton donor/acceptor. (3S)-3-hydroxy-3-methylglutaryl-CoA is bound by residues C166, N204, and T208. The active-site Acyl-thioester intermediate is C166. K243 is modified (N6-acetyllysine). K256 carries the N6-acetyllysine; alternate modification. The residue at position 256 (K256) is an N6-succinyllysine; alternate. Positions 258 and 301 each coordinate (3S)-3-hydroxy-3-methylglutaryl-CoA. Catalysis depends on H301, which acts as the Proton donor/acceptor. Residue K306 is modified to N6-acetyllysine. K310 contributes to the (3S)-3-hydroxy-3-methylglutaryl-CoA binding site. Position 310 is an N6-acetyllysine; alternate (K310). K310 is subject to N6-succinyllysine; alternate. Residue K333 is modified to N6-succinyllysine. K342, K350, K354, and K358 each carry N6-acetyllysine; alternate. 4 positions are modified to N6-succinyllysine; alternate: K342, K350, K354, and K358. 2 residues coordinate (3S)-3-hydroxy-3-methylglutaryl-CoA: N380 and S414. S433 is subject to Phosphoserine. N6-acetyllysine is present on K437. 2 positions are modified to phosphoserine: S440 and S456. K473 is subject to N6-acetyllysine; alternate. K473 carries the post-translational modification N6-succinyllysine; alternate.

The protein belongs to the thiolase-like superfamily. HMG-CoA synthase family. As to quaternary structure, homodimer. In terms of processing, succinylated. Desuccinylated by SIRT5. Succinylation, at least at Lys-310, inhibits the enzymatic activity.

Its subcellular location is the mitochondrion. It catalyses the reaction acetoacetyl-CoA + acetyl-CoA + H2O = (3S)-3-hydroxy-3-methylglutaryl-CoA + CoA + H(+). It functions in the pathway metabolic intermediate biosynthesis; (R)-mevalonate biosynthesis; (R)-mevalonate from acetyl-CoA: step 2/3. In terms of biological role, catalyzes the first irreversible step in ketogenesis, condensing acetyl-CoA to acetoacetyl-CoA to form HMG-CoA, which is converted by HMG-CoA reductase (HMGCR) into mevalonate. This Sus scrofa (Pig) protein is Hydroxymethylglutaryl-CoA synthase, mitochondrial (HMGCS2).